Consider the following 1594-residue polypeptide: Protein SHORTAGE IN CHIASMATA 1 (1594 aa).

5 disordered regions span residues 1148–1180, 1239–1283, 1396–1426, 1491–1523, and 1536–1594; these read DSRS…SKKK, APFK…QPDF, AADI…YADN, RSRA…NTKR, and GGNK…LVWK. A compositionally biased stretch (low complexity) spans 1151–1165; sequence SVMTDSSSSVSSGPD. Basic and acidic residues-rich tracts occupy residues 1254 to 1265 and 1402 to 1414; these read PSKDPERFDKKS and SSER…DSKY. Over residues 1577–1594 the composition is skewed to polar residues; that stretch reads QSLSYTANGTGQTKLVWK.

This sequence belongs to the XPF family. Interacts with PTD. As to expression, highest levels in young buds, where male meiosis occurs. Also present at low levels in plantlets, leaves, flowers, and roots.

It localises to the nucleus. Its function is as follows. Essential for the formation of class I meiotic crossovers. This is Protein SHORTAGE IN CHIASMATA 1 from Arabidopsis thaliana (Mouse-ear cress).